The primary structure comprises 380 residues: Septin homolog spn4 (380 aa).

Positions 25-298 (NGVAFTLMLC…EQYRQEQMKV (274 aa)) constitute a Septin-type G domain. A G1 motif region spans residues 35–42 (GESGLGKT). Residues 35-42 (GESGLGKT), Thr-70, Gly-96, 175-183 (KADMYTRRD), Gly-231, and Arg-247 contribute to the GTP site. Positions 93–96 (DTPG) are G3 motif. The interval 174–177 (AKAD) is G4 motif.

It belongs to the TRAFAC class TrmE-Era-EngA-EngB-Septin-like GTPase superfamily. Septin GTPase family. As to quaternary structure, component of the septin complex composed of two copies of each spn1, spn2, spn3 and spn4.

The protein localises to the cytoplasm. It is found in the cell cortex. Its function is as follows. Plays a role in the cell cycle. Involved in a late stage of septum formation leading to the separation of the daughter cells. The sequence is that of Septin homolog spn4 (spn4) from Schizosaccharomyces pombe (strain 972 / ATCC 24843) (Fission yeast).